We begin with the raw amino-acid sequence, 495 residues long: MTVMSGENADEASAAPGHPQDGSYPRQADHDDHECCERVVINISGLRFETQLKTLAQFPNTLLGNPKKRMRYFDPLRNEYFFDRNRPSFDAILYYYQSGGRLRRPVNVPLDMFSEEIKFYELGEEAMEKFREDEGFIKEEERPLPEKEYQRQVWLLFEYPESSGPARVIAIVSVMVILISIVIFCLETLPELKDDKDFTGTIHRIDNTTVIYTSNIFTDPFFIVETLCIIWFSFELVVRFFACPSKTDFFKNIMNFIDIVAIIPYFITLGTEIAEQEGNQKGEQATSLAILRVIRLVRVFRIFKLSRHSKGLQILGQTLKASMRELGLLIFFLFIGVILFSSAVYFAEAEEAESHFSSIPDAFWWAVVSMTTVGYGDMYPVTIGGKIVGSLCAIAGVLTIALPVPVIVSNFNYFYHRETEGEEQAQLLHVSSPNLASDSDLSRRSSSTISKSEYMEIEEDMNNSIAHYRQANIRTGNCTATDQNCVNKSKLLTDV.

The segment at M1 to H30 is disordered. Residues M1–E128 are tetramerization domain. Residues M1–G164 are Cytoplasmic-facing. Phosphoserine is present on S23. A helical membrane pass occupies residues P165–L186. Residues E187–P220 lie on the Extracellular side of the membrane. N-linked (GlcNAc...) asparagine glycosylation is present at N207. Residues F221 to A242 traverse the membrane as a helical segment. A lipid anchor (S-palmitoyl cysteine) is attached at C243. Over C243–I253 the chain is Cytoplasmic. Residues M254–A274 form a helical membrane-spanning segment. Over E275 to S287 the chain is Extracellular. Residues L288–H308 traverse the membrane as a helical; Voltage-sensor segment. The Cytoplasmic segment spans residues S309–M323. The S4-S5 linker stretch occupies residues K310 to M323. Phosphoserine; by PKA is present on S322. A helical transmembrane segment spans residues R324–Y345. Residues F346–I359 lie on the Extracellular side of the membrane. The segment at residues P360–T371 is an intramembrane region (helical). Positions T372–D377 match the Selectivity filter motif. Residues T372 to Y379 lie within the membrane without spanning it. The Extracellular segment spans residues P380–K386. Residues I387–Y415 form a helical membrane-spanning segment. At H416–V495 the chain is on the cytoplasmic side. A phosphoserine mark is found at S437 and S439. Position 446 is a phosphoserine; by PKA (S446). The PDZ-binding motif lies at T493 to V495.

It belongs to the potassium channel family. A (Shaker) (TC 1.A.1.2) subfamily. Kv1.1/KCNA1 sub-subfamily. In terms of assembly, homotetramer and heterotetramer with other channel-forming alpha subunits, such as KCNA2, KCNA4, KCNA5, KCNA6 and KCNA7. Channel activity is regulated by interaction with the beta subunits KCNAB1 and KCNAB2. Identified in a complex with KCNA2 and KCNAB2. Interacts (via C-terminus) with the PDZ domains of DLG1, DLG2 and DLG4. Interacts with LGI1 within a complex containing LGI1, KCNA4 and KCNAB1. Interacts (via cytoplasmic N-terminal domain) with KCNRG; this inhibits channel activity. Interacts with ANK3; this inhibits channel activity. Interacts (via N-terminus) with STX1A; this promotes channel inactivation. Interacts (via N-terminus) with the heterodimer formed by GNB1 and GNG2; this promotes channel inactivation. Can interact simultaneously with STX1A and the heterodimer formed by GNB1 and GNG2. Interacts with ADAM11. Palmitoylated on Cys-243; which may be required for membrane targeting. In terms of processing, N-glycosylated. Post-translationally, phosphorylated on tyrosine residues. Phosphorylation increases in response to NRG1; this inhibits channel activity. Phosphorylated by PKA. Phosphorylation at Ser-446 regulates channel activity by down-regulating expression at the cell membrane. In terms of tissue distribution, detected in hippocampus, in the middle third of the molecular layer of the dentate gyrus and in stratum radiatum and stratum oriens. Detected in the mossy fiber zone in the hippocampus CA3 region, at or near axon terminals. Detected in brain cortex, at basket cell terminals. Detected adjacent to nodes of Ranvier in juxtaparanodal zones in spinal cord nerve fibers, but also in paranodal regions in some myelinated spinal cord axons. Detected in juxtaparanodal regions adjacent to the nodes of Ranvier in myelinated axons in cerebellar white matter. Detected in sensory neurons. Detected in neurons from the medial nucleus of the trapezoid body. Detected in basolateral amygdala. Detected in the paraventricular nucleus of the hypothalamus. Detected in the islet of Langerhans (at protein level).

The protein resides in the cell membrane. It localises to the membrane. It is found in the cell projection. The protein localises to the axon. Its subcellular location is the cytoplasmic vesicle. The protein resides in the perikaryon. It localises to the endoplasmic reticulum. It is found in the dendrite. The protein localises to the cell junction. Its subcellular location is the synapse. The protein resides in the presynapse. It localises to the presynaptic cell membrane. The enzyme catalyses K(+)(in) = K(+)(out). Inhibited by 4-aminopyridine (4-AP) and by tetraethylammonium (TEA). Inhibited by kaliotoxin (KTX). Functionally, voltage-gated potassium channel that mediates transmembrane potassium transport in excitable membranes, primarily in the brain and the central nervous system, but also in the kidney. Contributes to the regulation of the membrane potential and nerve signaling, and prevents neuronal hyperexcitability. Forms tetrameric potassium-selective channels through which potassium ions pass in accordance with their electrochemical gradient. The channel alternates between opened and closed conformations in response to the voltage difference across the membrane. Can form functional homotetrameric channels and heterotetrameric channels that contain variable proportions of KCNA1, KCNA2, KCNA4, KCNA5, KCNA6, KCNA7, and possibly other family members as well; channel properties depend on the type of alpha subunits that are part of the channel. Channel properties are modulated by cytoplasmic beta subunits that regulate the subcellular location of the alpha subunits and promote rapid inactivation of delayed rectifier potassium channels. In vivo, membranes probably contain a mixture of heteromeric potassium channel complexes, making it difficult to assign currents observed in intact tissues to any particular potassium channel family member. Homotetrameric KCNA1 forms a delayed-rectifier potassium channel that opens in response to membrane depolarization, followed by slow spontaneous channel closure. In contrast, a heterotetrameric channel formed by KCNA1 and KCNA4 shows rapid inactivation. Regulates neuronal excitability in hippocampus, especially in mossy fibers and medial perforant path axons, preventing neuronal hyperexcitability. Response to toxins that are selective for KCNA1, respectively for KCNA2, suggests that heteromeric potassium channels composed of both KCNA1 and KCNA2 play a role in pacemaking and regulate the output of deep cerebellar nuclear neurons. May function as down-stream effector for G protein-coupled receptors and inhibit GABAergic inputs to basolateral amygdala neurons. May contribute to the regulation of neurotransmitter release, such as gamma-aminobutyric acid (GABA) release. Plays a role in regulating the generation of action potentials and preventing hyperexcitability in myelinated axons of the vagus nerve, and thereby contributes to the regulation of heart contraction. Required for normal neuromuscular responses. Regulates the frequency of neuronal action potential firing in response to mechanical stimuli, and plays a role in the perception of pain caused by mechanical stimuli, but does not play a role in the perception of pain due to heat stimuli. Required for normal responses to auditory stimuli and precise location of sound sources, but not for sound perception. The use of toxins that block specific channels suggest that it contributes to the regulation of the axonal release of the neurotransmitter dopamine. Required for normal postnatal brain development and normal proliferation of neuronal precursor cells in the brain. Plays a role in the reabsorption of Mg(2+) in the distal convoluted tubules in the kidney and in magnesium ion homeostasis, probably via its effect on the membrane potential. This Rattus norvegicus (Rat) protein is Potassium voltage-gated channel subfamily A member 1.